The following is a 256-amino-acid chain: Trans-aconitate 2-methyltransferase (256 aa).

It belongs to the methyltransferase superfamily. Tam family.

The protein resides in the cytoplasm. It catalyses the reaction trans-aconitate + S-adenosyl-L-methionine = (E)-3-(methoxycarbonyl)pent-2-enedioate + S-adenosyl-L-homocysteine. Functionally, catalyzes the S-adenosylmethionine monomethyl esterification of trans-aconitate. The protein is Trans-aconitate 2-methyltransferase of Rhizobium leguminosarum bv. trifolii (strain WSM2304).